A 708-amino-acid polypeptide reads, in one-letter code: Large T antigen (708 aa).

Met1 is subject to N-acetylmethionine; by host. The J domain occupies 12–75; sequence QLMDLLGLER…VKYAHQPDFG (64 aa). A binding of LT to the CUL7 complex region spans residues 63–89; the sequence is EDGVKYAHQPDFGGFWDATEIPTYGTD. Positions 103–107 match the LXCXE motif motif; that stretch reads LFCSE. Phosphoserine; by host occurs at positions 106, 112, 120, and 123. The tract at residues 109-134 is disordered; it reads MPSSDDEATADSQHSTPPKKKRKVED. At Thr124 the chain carries Phosphothreonine; by host. A Nuclear localization signal motif is present at residues 125-132; that stretch reads PPKKKRKV. The T-ag OBD DNA-binding region spans 139–254; sequence PSELLSFLSH…EESLPGGLKE (116 aa). The T-ag D1-type zinc finger occupies 265–357; sequence TKQVSWKLVT…KRVDSLQLTR (93 aa). Positions 302, 305, 313, and 317 each coordinate Zn(2+). Residues 337–672 are binding to host TP53 protein; it reads CQQAVDTVLA…IDSQSQGSFQ (336 aa). An SF3 helicase domain is found at 400-560; the sequence is KMDSVVYDFL…DYLKHCLERS (161 aa). The interval 418-616 is ATPase activity; that stretch reads KKRYWLFKGP…FSLSVYQKMK (199 aa). 426-433 is an ATP binding site; that stretch reads GPIDSGKT. Residues 627–708 form a C-terminal region region; it reads DWLRNSDDDD…PPTPPPEPET (82 aa). Residues 630 to 685 form a disordered region; sequence RNSDDDDEDSQENADKNEDGGEKNMEDSGHETGIDSQSQGSFQAPQSSQSVHDHNQ. Ser639 carries the phosphoserine; by host modification. The span at 642–662 shows a compositional bias: basic and acidic residues; that stretch reads NADKNEDGGEKNMEDSGHETG. Positions 663–679 are enriched in polar residues; the sequence is IDSQSQGSFQAPQSSQS. Residues Ser676, Ser677, and Ser679 each carry the phosphoserine; by host modification. Lys697 carries the N6-acetyllysine; by host modification. Residues 699 to 708 are CPD; that stretch reads PPTPPPEPET. Thr701 carries the post-translational modification Phosphothreonine; by host.

As to quaternary structure, isoform large T antigen forms homohexamers in the presence of ATP. Interacts with host HDAC1. Interacts (via LXCXE domain) with host RB1; the interaction induces the aberrant dissociation of RB1-E2F1 complex thereby disrupting RB1's activity. Interacts (via LXCXE domain) with host pRB-related proteins RBL1 and RBL2. Interacts (via C-terminus) with host TOP1 and POLA1 allowing DNA replication. Interacts with host TP53, inhibiting TP53 binding to DNA. Interacts with host preinitiation complex components TBP, TFIIA and TFIID to regulate transcription initiation. LT interacts (via CPD region) with host FBW7gamma isoform (via WD repeats); seems to function as a competitive inhibitor of FBW7gamma function for physiologic substrates. LT interacts with host E3 ubiquitin ligase CUL7; this interaction seems to inhibit CUL7. Component of a SCF(CUL7)-like complex composed of SV40 Lt and host proteins CUL7, SKP1, RBX1, and FBXW8. LT interacts with host BUB1; this interaction induces activation of a DNA damage response and promotes p53 stabilization and phosphorylation. Interacts with host FAM111A and this interaction is required for efficient viral replication and sustained viral gene expression in restrictive cell types. Mg(2+) is required as a cofactor. Post-translationally, phosphorylated on both serine and threonine residues. Phosphorylation on Ser-120 and Ser-123 inhibits viral replication, while phosphorylation on Thr-124 enhances replication by activating the DNA-binding domain. Phosphorylation on Thr-701 is required for binding to host FBW7gamma isoform. Dephosphorylated preferentially by PP2A on Ser-120, Ser-123, Ser-677 and perhaps Ser-679. Small t antigen inhibits the dephosphorylation by the AC form of PP2A. In terms of processing, O-Glycosylated near the C-terminal region. Acetylated by CBP in a TP53-dependent manner.

It localises to the host nucleus. It carries out the reaction Couples ATP hydrolysis with the unwinding of duplex DNA by translocating in the 3'-5' direction.. It catalyses the reaction ATP + H2O = ADP + phosphate + H(+). DNA helicase activity is inhibited by ATP-gamma-S. Isoform large T antigen is a key early protein essential for both driving viral replication and inducing cellular transformation. Plays a role in viral genome replication by driving entry of quiescent cells into the cell cycle and by autoregulating the synthesis of viral early mRNA. Displays highly oncogenic activities by corrupting the host cellular checkpoint mechanisms that guard cell division and the transcription, replication, and repair of DNA. Participates in the modulation of cellular gene expression preceeding viral DNA replication. This step involves binding to host key cell cycle regulators retinoblastoma protein RB1/pRb and TP53. Induces the disassembly of host E2F1 transcription factors from RB1, thus promoting transcriptional activation of E2F1-regulated S-phase genes. Inhibits host TP53 binding to DNA, abrogating the ability of TP53 to stimulate gene expression. Plays the role of a TFIID-associated factor (TAF) in transcription initiation for all three RNA polymerases, by stabilizing the TBP-TFIIA complex on promoters. Initiates viral DNA replication and unwinding via interactions with the viral origin of replication. Binds two adjacent sites in the SV40 origin. The replication fork movement is facilitated by Large T antigen helicase activity. Has processive 3'-5' DNA helicase activity which requires a short 3' single-stranded region and ATP; other (d)NTPs can partially replace ATP. Activates the transcription of viral late mRNA, through host TBP and TFIIA stabilization. Interferes with histone deacetylation mediated by HDAC1, leading to activation of transcription. May inactivate the growth-suppressing properties of the E3 ubiquitin ligase CUL7. Functionally, isoform 17kT antigen targets host RBL2 for degradation and promotes cell proliferation. Transactivates host cyclin A promoter through its J domain. In terms of biological role, unwinds G4 DNA (planar arrays of 4 guanine bases stabilized by hydrogen bonds, parallel and antiparallel arrays were tested); unwinding occurs in the 3'-5' direction, requires a 3' single-stranded end and hydrolyzable ATP. This is Large T antigen from Macaca (macaques).